Consider the following 369-residue polypeptide: Tyrosinase-like protein orsC (369 aa).

The first 23 residues, 1–23, serve as a signal peptide directing secretion; sequence MLAFNPLVTALAALIFLFCQANA. Positions 112 and 121 each coordinate Cu cation. N-linked (GlcNAc...) asparagine glycosylation is found at Asn-165, Asn-179, Asn-253, and Asn-272. His-315 is a Cu cation binding site.

The protein operates within secondary metabolite biosynthesis. Functionally, tyrosinase-like protein; part of the gene cluster that mediates the biosynthesis of orsellinic acid, as well as of the cathepsin K inhibitors F9775 A and F9775 B. The non-reducing polyketide synthase orsA produces orsellinic acid by condensing acetyl-CoA with 3 malonyl-CoA units. Further modifications by the decarboxylase orsB and the tyrosinase-like protein orsC lead to the production of F9775 A and F9775 B. The functions of orsD and orsE remain unclear since only orsB and orsC are required to convert orsellinic acid into F9775 A and F9775 B. The polypeptide is Tyrosinase-like protein orsC (Emericella nidulans (strain FGSC A4 / ATCC 38163 / CBS 112.46 / NRRL 194 / M139) (Aspergillus nidulans)).